A 306-amino-acid polypeptide reads, in one-letter code: Putative HPr kinase/phosphorylase 2 (306 aa).

Active-site residues include His138 and Lys159. Residue 153-160 participates in ATP binding; it reads GESGVGKS. Residue Ser160 participates in Mg(2+) binding. Asp177 acts as the Proton acceptor; for phosphorylation activity. Proton donor; for dephosphorylation activity in catalysis. The tract at residues 201–210 is important for the catalytic mechanism of both phosphorylation and dephosphorylation; it reads LALRSVGLLN. Positions 264-269 are important for the catalytic mechanism of dephosphorylation; sequence QLQPGR.

The protein belongs to the HPrK/P family. In terms of assembly, homohexamer. Requires Mg(2+) as cofactor.

The catalysed reaction is [HPr protein]-L-serine + ATP = [HPr protein]-O-phospho-L-serine + ADP + H(+). The enzyme catalyses [HPr protein]-O-phospho-L-serine + phosphate + H(+) = [HPr protein]-L-serine + diphosphate. Its function is as follows. Catalyzes the ATP- as well as the pyrophosphate-dependent phosphorylation of a specific serine residue in HPr, a phosphocarrier protein of the phosphoenolpyruvate-dependent sugar phosphotransferase system (PTS). HprK/P also catalyzes the pyrophosphate-producing, inorganic phosphate-dependent dephosphorylation (phosphorolysis) of seryl-phosphorylated HPr (P-Ser-HPr). The two antagonistic activities of HprK/P are regulated by several intracellular metabolites, which change their concentration in response to the absence or presence of rapidly metabolisable carbon sources (glucose, fructose, etc.) in the growth medium. Also phosphorylates/dephosphorylates the HPr-like catabolite repression protein crh on a specific serine residue. Therefore, by controlling the phosphorylation state of HPr and crh, HPrK/P is a sensor enzyme that plays a major role in the regulation of carbon metabolism and sugar transport: it mediates carbon catabolite repression (CCR), and regulates PTS-catalyzed carbohydrate uptake and inducer exclusion. This chain is Putative HPr kinase/phosphorylase 2 (hprK2), found in Oceanobacillus iheyensis (strain DSM 14371 / CIP 107618 / JCM 11309 / KCTC 3954 / HTE831).